Reading from the N-terminus, the 250-residue chain is 2,3-bisphosphoglycerate-dependent phosphoglycerate mutase (250 aa).

Substrate-binding positions include 8–15 (RHGQSAWN), 21–22 (TG), arginine 60, 87–90 (ERHY), lysine 98, 114–115 (RR), and 183–184 (GN). The active-site Tele-phosphohistidine intermediate is histidine 9. The Proton donor/acceptor role is filled by glutamate 87.

Belongs to the phosphoglycerate mutase family. BPG-dependent PGAM subfamily. Homodimer.

It catalyses the reaction (2R)-2-phosphoglycerate = (2R)-3-phosphoglycerate. It functions in the pathway carbohydrate degradation; glycolysis; pyruvate from D-glyceraldehyde 3-phosphate: step 3/5. Catalyzes the interconversion of 2-phosphoglycerate and 3-phosphoglycerate. The sequence is that of 2,3-bisphosphoglycerate-dependent phosphoglycerate mutase from Nitratidesulfovibrio vulgaris (strain DP4) (Desulfovibrio vulgaris).